Reading from the N-terminus, the 216-residue chain is Cytochrome c biogenesis ATP-binding export protein CcmA (216 aa).

Residues 11–216 enclose the ABC transporter domain; that stretch reads VSASKLTCIR…RKIRLDYRFV (206 aa). 43-50 contributes to the ATP binding site; sequence GPNGAGKT.

This sequence belongs to the ABC transporter superfamily. CcmA exporter (TC 3.A.1.107) family. The complex is composed of two ATP-binding proteins (CcmA) and two transmembrane proteins (CcmB).

Its subcellular location is the cell inner membrane. The catalysed reaction is heme b(in) + ATP + H2O = heme b(out) + ADP + phosphate + H(+). In terms of biological role, part of the ABC transporter complex CcmAB involved in the biogenesis of c-type cytochromes; once thought to export heme, this seems not to be the case, but its exact role is uncertain. Responsible for energy coupling to the transport system. The sequence is that of Cytochrome c biogenesis ATP-binding export protein CcmA from Shewanella sp. (strain MR-4).